A 479-amino-acid polypeptide reads, in one-letter code: Bifunctional AAC/APH (479 aa).

Residues I8–D180 enclose the N-acetyltransferase domain. The tract at residues K110–F153 is acetyl-CoA binding site. The Proton acceptor; for phosphotransferase activity role is filled by D374. D393 is a binding site for a gentamycin.

It in the C-terminal section; belongs to the aminoglycoside phosphotransferase family.

Its subcellular location is the cytoplasm. It catalyses the reaction a gentamycin + GTP = a gentamycin 2''-phosphate + GDP + H(+). Its function is as follows. Involved in resistance to gentamicin, tobramycin, and kanamycin. Tobramycin and kanamycin resistance is due to the ACC activity, specified by N-terminal region. The C-terminal region is a kinase that phosphorylates several 4,6-disubstituted aminoglycosides. This chain is Bifunctional AAC/APH (aacA-aphD), found in Enterococcus faecalis (strain ATCC 700802 / V583).